Reading from the N-terminus, the 524-residue chain is Chromosomal replication initiator protein DnaA (524 aa).

The interval 1–73 (MELPESAWEQ…DELLSSADHH (73 aa)) is domain I, interacts with DnaA modulators. Residues 73–187 (HPITSVEISV…DVEGGLQHKS (115 aa)) form a domain II region. Polar residues-rich tracts occupy residues 86–95 (RSTSFETNQG), 106–126 (APRQ…QPQQ), and 153–165 (NGYN…QPYN). The segment at 86-173 (RSTSFETNQG…YNDNPMGQGK (88 aa)) is disordered. The domain III, AAA+ region stretch occupies residues 188–404 (NLNPTFIFDN…GALKRVIANA (217 aa)). Positions 232, 234, 235, and 236 each coordinate ATP. Positions 405–524 (HFTGRDISVE…VKNLLRTLTT (120 aa)) are domain IV, binds dsDNA.

This sequence belongs to the DnaA family. In terms of assembly, oligomerizes as a right-handed, spiral filament on DNA at oriC.

It localises to the cytoplasm. Its function is as follows. Plays an essential role in the initiation and regulation of chromosomal replication. ATP-DnaA binds to the origin of replication (oriC) to initiate formation of the DNA replication initiation complex once per cell cycle. Binds the DnaA box (a 9 base pair repeat at the origin) and separates the double-stranded (ds)DNA. Forms a right-handed helical filament on oriC DNA; dsDNA binds to the exterior of the filament while single-stranded (ss)DNA is stabiized in the filament's interior. The ATP-DnaA-oriC complex binds and stabilizes one strand of the AT-rich DNA unwinding element (DUE), permitting loading of DNA polymerase. After initiation quickly degrades to an ADP-DnaA complex that is not apt for DNA replication. Binds acidic phospholipids. The protein is Chromosomal replication initiator protein DnaA of Saccharophagus degradans (strain 2-40 / ATCC 43961 / DSM 17024).